The chain runs to 102 residues: MIVPFEHVLILAGILFALGLVCVLVWRMNLIMLLIGIEVMLNAAMLAFVGGAARWGMADGQVFSLVIMALTSAEVSLALAMVVYLHRRKRTVDADEFSELKG.

3 helical membrane-spanning segments follow: residues 5 to 25, 30 to 50, and 65 to 85; these read FEHV…CVLV, LIML…AFVG, and LVIM…VVYL.

The protein belongs to the complex I subunit 4L family. In terms of assembly, NDH-1 is composed of 14 different subunits. Subunits NuoA, H, J, K, L, M, N constitute the membrane sector of the complex.

It is found in the cell inner membrane. It catalyses the reaction a quinone + NADH + 5 H(+)(in) = a quinol + NAD(+) + 4 H(+)(out). Its function is as follows. NDH-1 shuttles electrons from NADH, via FMN and iron-sulfur (Fe-S) centers, to quinones in the respiratory chain. The immediate electron acceptor for the enzyme in this species is believed to be ubiquinone. Couples the redox reaction to proton translocation (for every two electrons transferred, four hydrogen ions are translocated across the cytoplasmic membrane), and thus conserves the redox energy in a proton gradient. This chain is NADH-quinone oxidoreductase subunit K 1, found in Geobacter metallireducens (strain ATCC 53774 / DSM 7210 / GS-15).